The primary structure comprises 245 residues: Phycocyanobilin:ferredoxin oxidoreductase (245 aa).

Belongs to the HY2 family.

The enzyme catalyses (2R,3Z)-phycocyanobilin + 4 oxidized [2Fe-2S]-[ferredoxin] = biliverdin IXalpha + 4 reduced [2Fe-2S]-[ferredoxin] + 4 H(+). In terms of biological role, catalyzes the four-electron reduction of biliverdin IX-alpha (2-electron reduction at both the A and D rings); the reaction proceeds via an isolatable 2-electron intermediate, 181,182-dihydrobiliverdin. The polypeptide is Phycocyanobilin:ferredoxin oxidoreductase (pcyA) (Nostoc punctiforme (strain ATCC 29133 / PCC 73102)).